A 481-amino-acid polypeptide reads, in one-letter code: ATP synthase subunit beta, chloroplastic (481 aa).

162 to 169 (GGAGVGKT) provides a ligand contact to ATP.

It belongs to the ATPase alpha/beta chains family. As to quaternary structure, F-type ATPases have 2 components, CF(1) - the catalytic core - and CF(0) - the membrane proton channel. CF(1) has five subunits: alpha(3), beta(3), gamma(1), delta(1), epsilon(1). CF(0) has four main subunits: a(1), b(1), b'(1) and c(9-12).

It is found in the plastid. The protein resides in the chloroplast thylakoid membrane. It catalyses the reaction ATP + H2O + 4 H(+)(in) = ADP + phosphate + 5 H(+)(out). Functionally, produces ATP from ADP in the presence of a proton gradient across the membrane. The catalytic sites are hosted primarily by the beta subunits. The sequence is that of ATP synthase subunit beta, chloroplastic from Chlorella vulgaris (Green alga).